We begin with the raw amino-acid sequence, 106 residues long: UPF0145 protein Daci_3728 (106 aa).

The protein belongs to the UPF0145 family.

This Delftia acidovorans (strain DSM 14801 / SPH-1) protein is UPF0145 protein Daci_3728.